Reading from the N-terminus, the 783-residue chain is Tricorn protease-interacting factor F2 (783 aa).

Residues Glu107 and 236 to 240 contribute to the substrate site; that span reads GAMEN. His271 is a Zn(2+) binding site. Glu272 functions as the Proton acceptor in the catalytic mechanism. Zn(2+) contacts are provided by His275 and Glu294.

This sequence belongs to the peptidase M1 family. In terms of assembly, monomer. Part of the Tricorn proteolytic complex. Zn(2+) serves as cofactor.

The protein resides in the cytoplasm. Proteases F1, F2 and F3 degrade oligopeptides produced by Tricorn (themselves probably produced by the proteasome), yielding free amino acids. The chain is Tricorn protease-interacting factor F2 (trf2) from Thermoplasma acidophilum (strain ATCC 25905 / DSM 1728 / JCM 9062 / NBRC 15155 / AMRC-C165).